A 323-amino-acid chain; its full sequence is Transcription factor MafB (323 aa).

Lysine 32 participates in a covalent cross-link: Glycyl lysine isopeptide (Lys-Gly) (interchain with G-Cter in SUMO). Over residues 34-43 (EPLGRAERPG) the composition is skewed to basic and acidic residues. Disordered stretches follow at residues 34-78 (EPLG…PTEP) and 116-210 (PVPQ…VEDR). The span at 54–77 (SVSSTPLSTPCSSVPSSPSFSPTE) shows a compositional bias: low complexity. Basic residues-rich tracts occupy residues 129-143 (SAHH…HPHH) and 159-168 (AHPHHHHHHQ). Residues 192-201 (PHATAAATAA) are compositionally biased toward low complexity. The interval 238–263 (RLKQKRRTLKNRGYAQSCRYKRVQQK) is basic motif. The bZIP domain occupies 238–301 (RLKQKRRTLK…DAYKVKCEKL (64 aa)). Positions 266–287 (LENEKTQLIQQVEQLKQEVSRL) are leucine-zipper. Residue lysine 297 forms a Glycyl lysine isopeptide (Lys-Gly) (interchain with G-Cter in SUMO) linkage.

The protein belongs to the bZIP family. Maf subfamily. In terms of assembly, homodimer or heterodimer with other bHLH-Zip transcription factors. Forms homodimers and heterodimers with FOS, FOSB and FOSL2, but not with JUN proteins (JUN, JUNB and JUND). Interacts with the intracellular cytoplasmic domain of LRP1 (LRPICD); the interaction results in a moderate reduction of MAFB transcriptional potential. Binds DNA as a homodimer or a heterodimer. Interacts with PAX6; the interaction is direct. Interacts with ETS1 and LRP1. In terms of processing, sumoylated. Sumoylation on Lys-32 and Lys-297 stimulates its transcriptional repression activity and promotes macrophage differentiation from myeloid progenitors. Expressed in pancreatic alpha-cells (glucagon-positive cells), in podocytes of the kidney and macrophages (at protein level). Most abundant in kidney, gut, lung and brain.

It localises to the nucleus. Functionally, acts as a transcriptional activator or repressor. Plays a pivotal role in regulating lineage-specific hematopoiesis by repressing ETS1-mediated transcription of erythroid-specific genes in myeloid cells. Required for monocytic, macrophage, osteoclast, podocyte and islet beta cell differentiation. Involved in renal tubule survival and F4/80 maturation. Activates the insulin and glucagon promoters. Together with PAX6, transactivates weakly the glucagon gene promoter through the G1 element. SUMO modification controls its transcriptional activity and ability to specify macrophage fate. Binds element G1 on the glucagon promoter. Involved either as an oncogene or as a tumor suppressor, depending on the cell context. Required for the transcriptional activation of HOXB3 in the rhombomere r5 in the hindbrain. The protein is Transcription factor MafB (Mafb) of Mus musculus (Mouse).